Consider the following 609-residue polypeptide: UvrABC system protein C (609 aa).

The GIY-YIG domain maps to 16-94; that stretch reads SSAGVYRMYD…IKQYMPKYNV (79 aa). Residues 203–238 form the UVR domain; it reads KQVISELVAKMEEAAEQQAYEQAARFRDQIMALRRV.

This sequence belongs to the UvrC family. Interacts with UvrB in an incision complex.

It localises to the cytoplasm. Functionally, the UvrABC repair system catalyzes the recognition and processing of DNA lesions. UvrC both incises the 5' and 3' sides of the lesion. The N-terminal half is responsible for the 3' incision and the C-terminal half is responsible for the 5' incision. The chain is UvrABC system protein C from Shewanella oneidensis (strain ATCC 700550 / JCM 31522 / CIP 106686 / LMG 19005 / NCIMB 14063 / MR-1).